Consider the following 231-residue polypeptide: 7-cyano-7-deazaguanine synthase (231 aa).

8–18 (FSGGQDSTTCL) lines the ATP pocket. Zn(2+) contacts are provided by Cys-188, Cys-197, Cys-200, and Cys-203.

The protein belongs to the QueC family. Zn(2+) serves as cofactor.

It carries out the reaction 7-carboxy-7-deazaguanine + NH4(+) + ATP = 7-cyano-7-deazaguanine + ADP + phosphate + H2O + H(+). It functions in the pathway purine metabolism; 7-cyano-7-deazaguanine biosynthesis. Functionally, catalyzes the ATP-dependent conversion of 7-carboxy-7-deazaguanine (CDG) to 7-cyano-7-deazaguanine (preQ(0)). The protein is 7-cyano-7-deazaguanine synthase of Escherichia fergusonii (strain ATCC 35469 / DSM 13698 / CCUG 18766 / IAM 14443 / JCM 21226 / LMG 7866 / NBRC 102419 / NCTC 12128 / CDC 0568-73).